A 930-amino-acid chain; its full sequence is Isoleucine--tRNA ligase (930 aa).

The short motif at 57–67 (PYANGNIHVGH) is the 'HIGH' region element. An L-isoleucyl-5'-AMP-binding site is contributed by glutamate 554. The 'KMSKS' region signature appears at 595 to 599 (KMSKS). Lysine 598 contributes to the ATP binding site. 4 residues coordinate Zn(2+): cysteine 888, cysteine 891, cysteine 908, and cysteine 911.

The protein belongs to the class-I aminoacyl-tRNA synthetase family. IleS type 1 subfamily. In terms of assembly, monomer. Zn(2+) is required as a cofactor.

It localises to the cytoplasm. It carries out the reaction tRNA(Ile) + L-isoleucine + ATP = L-isoleucyl-tRNA(Ile) + AMP + diphosphate. In terms of biological role, catalyzes the attachment of isoleucine to tRNA(Ile). As IleRS can inadvertently accommodate and process structurally similar amino acids such as valine, to avoid such errors it has two additional distinct tRNA(Ile)-dependent editing activities. One activity is designated as 'pretransfer' editing and involves the hydrolysis of activated Val-AMP. The other activity is designated 'posttransfer' editing and involves deacylation of mischarged Val-tRNA(Ile). This chain is Isoleucine--tRNA ligase, found in Streptococcus pneumoniae (strain ATCC BAA-255 / R6).